An 841-amino-acid chain; its full sequence is MMAHHSMDDRDSPDKGFDSGKYVRYTPEQVEALERVYAECPKPSSLRRQQLIRECPILCNIEPRQIKVWFQNRRCREKQRKESARLQTVNRKLSAMNKLLMEENDRLQKQVSNLVYENGFMKHRIHTASGTTTDNSCESVVVSGQQRQQQNPTHQHPQRDVNNPANLLSIAEETLAEFLCKATGTAVDWVQMIGMKPGPDSIGIVAVSRNCSGIAARACGLVSLEPMKVAEILKDRPSWFRDCRCVETLNVIPTGNGGTIELVNTQIYAPTTLAAARDFWTLRYSTSLEDGSYVVCERSLTSATGGPNGPLSSSFVRAKMLSSGFLIRPCDGGGSIIHIVDHVDLDVSSVPEVLRPLYESSKILAQKMTVAALRHVRQIAQETSGEVQYSGGRQPAVLRTFSQRLCRGFNDAVNGFVDDGWSPMSSDGGEDITIMINSSSAKFAGSQYGSSFLPSFGSGVLCAKASMLLQNVPPLVLIRFLREHRAEWADYGVDAYSAASLRATPYAVPCVRTGGFPSNQVILPLAQTLEHEEFLEVVRLGGHAYSPEDMGLSRDMYLLQLCSGVDENVVGGCAQLVFAPIDESFADDAPLLPSGFRVIPLDQKTNPNDHQSASRTRDLASSLDGSTKTDSETNSRLVLTIAFQFTFDNHSRDNVATMARQYVRNVVGSIQRVALAITPRPGSMQLPTSPEALTLVRWITRSYSIHTGADLFGADSQSCGGDTLLKQLWDHSDAILCCSLKTNASPVFTFANQAGLDMLETTLVALQDIMLDKTLDDSGRRALCSEFAKIMQQGYANLPAGICVSSMGRPVSYEQATVWKVVDDNESNHCLAFTLVSWSFV.

Residues 1-18 (MMAHHSMDDRDSPDKGFD) are compositionally biased toward basic and acidic residues. A disordered region spans residues 1-21 (MMAHHSMDDRDSPDKGFDSGK). A DNA-binding region (homeobox) is located at residues 18–81 (DSGKYVRYTP…NRRCREKQRK (64 aa)). A coiled-coil region spans residues 85 to 118 (RLQTVNRKLSAMNKLLMEENDRLQKQVSNLVYEN). Disordered stretches follow at residues 140–162 (VVVS…RDVN) and 602–630 (DQKT…TKTD). Positions 145 to 155 (QQRQQQNPTHQ) are enriched in low complexity. The START domain occupies 160–388 (DVNNPANLLS…IAQETSGEVQ (229 aa)). Residues 603 to 614 (QKTNPNDHQSAS) show a composition bias toward polar residues.

Belongs to the HD-ZIP homeobox family. Class III subfamily. In terms of assembly, binds DNA as homodimer. Interacts with ESR1 and ESR2. Interacts with ZPR3.

The protein localises to the nucleus. Its function is as follows. Probable transcription factor involved in the determination of adaxial-abaxial polarity in ovule primordium. Specifies adaxial leaf fates. Binds to the DNA sequence 5'-GTAAT[GC]ATTAC-3'. The protein is Homeobox-leucine zipper protein ATHB-9 (ATHB-9) of Arabidopsis thaliana (Mouse-ear cress).